A 195-amino-acid chain; its full sequence is MPKLGMQSIRRRQLIDATLEAINEVGMHDATIAQIARRAGVSTGIISHYFRDKNGLLEATMRDITSQLRDAVLNRLHALPQGSAEQRLQAIVGGNFDETQVSSAAMKAWLAFWASSMHQPMLYRLQQVSSRRLLSNLVSEFRRELPREQAQEAGYGLAALIDGLWLRAALSGKPLDKPLAHSLTRHFITQHLPTD.

The region spanning 8 to 68 (SIRRRQLIDA…ATMRDITSQL (61 aa)) is the HTH tetR-type domain. The H-T-H motif DNA-binding region spans 31-50 (TIAQIARRAGVSTGIISHYF).

It participates in amine and polyamine biosynthesis; betaine biosynthesis via choline pathway [regulation]. Its function is as follows. Repressor involved in the biosynthesis of the osmoprotectant glycine betaine. It represses transcription of the choline transporter BetT and the genes of BetAB involved in the synthesis of glycine betaine. The protein is HTH-type transcriptional regulator BetI of Escherichia coli O8 (strain IAI1).